The primary structure comprises 198 residues: Ribonuclease HII (198 aa).

The RNase H type-2 domain maps to 10–198; the sequence is QLVAGVDEVG…PVKRALGLAS (189 aa). Residues Asp16, Glu17, and Asp108 each coordinate a divalent metal cation.

It belongs to the RNase HII family. It depends on Mn(2+) as a cofactor. Mg(2+) is required as a cofactor.

The protein resides in the cytoplasm. It catalyses the reaction Endonucleolytic cleavage to 5'-phosphomonoester.. Functionally, endonuclease that specifically degrades the RNA of RNA-DNA hybrids. The chain is Ribonuclease HII from Escherichia coli O81 (strain ED1a).